The primary structure comprises 457 residues: MKVERRTIEYIPNEERHGKAKDLFPVWFGANMHITTLVTGTIPVAMGLNLFWSVAAIICGTLIGAIFMASHSAQGPQLGIPQMIQSRAQFGVIGAILPLFLVMFIYLGFFASSTILAAGTLSSFVPIPGSWSIIGLSAVCFLLTIFGHDLIHKMQKILSWTSFAVFFAATILIFQLPIPAGSWIPGAIDLPIFLVAVSAVATWQLAYAPYVADYSRYLPVKTPASKTFWYSYAGTSVSSIWMMLLGALLTTSLPDFTANSGSQIVQLFGPFSFIMLIIVLFGQMAINVFNLYGAFMSTTTTLEPFLKLKVTPKVRIIMILGVTLVGTVLSLLGQSNFMELFLNFIFFISYFLIPWTAINLVDYYFVRHGKYQVKAMFDVNGPYGKVNWITTIAFVLSILLEIPFINTSFYIGPLAKMFGGGDIAWIIGLAVPSVLYYVLMKPRLKKRAGYQEKLSSL.

The next 12 helical transmembrane spans lie at phenylalanine 24–valine 44, leucine 50–serine 70, phenylalanine 90–phenylalanine 110, isoleucine 127–glycine 147, alanine 164–isoleucine 184, isoleucine 192–alanine 212, phenylalanine 228–leucine 248, isoleucine 264–methionine 284, isoleucine 316–asparagine 336, phenylalanine 341–valine 361, isoleucine 392–glycine 412, and glycine 420–methionine 440.

The protein belongs to the purine-cytosine permease (2.A.39) family.

The protein localises to the cell membrane. The chain is Putative purine-cytosine permease YxlA (yxlA) from Bacillus subtilis (strain 168).